Consider the following 79-residue polypeptide: Small ribosomal subunit protein bS18 (79 aa).

The protein belongs to the bacterial ribosomal protein bS18 family. In terms of assembly, part of the 30S ribosomal subunit. Forms a tight heterodimer with protein bS6.

Its function is as follows. Binds as a heterodimer with protein bS6 to the central domain of the 16S rRNA, where it helps stabilize the platform of the 30S subunit. The polypeptide is Small ribosomal subunit protein bS18 (Nitrobacter hamburgensis (strain DSM 10229 / NCIMB 13809 / X14)).